Consider the following 208-residue polypeptide: Small ribosomal subunit protein uS5 (208 aa).

Residues 28-91 (LEERLIYANR…EKAKKNVIRV (64 aa)) enclose the S5 DRBM domain.

It belongs to the universal ribosomal protein uS5 family. In terms of assembly, part of the 30S ribosomal subunit. Contacts proteins S4 and S8.

Functionally, with S4 and S12 plays an important role in translational accuracy. Its function is as follows. Located at the back of the 30S subunit body where it stabilizes the conformation of the head with respect to the body. The protein is Small ribosomal subunit protein uS5 of Aquifex aeolicus (strain VF5).